A 5634-amino-acid chain; its full sequence is Hemicentin-1 (5634 aa).

An N-terminal signal peptide occupies residues 1 to 21 (MIAQEVVHTVFLVALFRSSLA). The region spanning 41–216 (TLAFVFDVTG…EVLKWVEEAV (176 aa)) is the VWFA domain. Ig-like C2-type domains follow at residues 431–517 (PKVT…FDVS), 520–607 (PPII…VFLT), 612–697 (PKVT…STLR), 702–788 (PKLV…LTLD), 793–883 (PVFI…TTVT), 890–976 (PLIG…TSVA), 981–1067 (PSIQ…VQLT), 1072–1166 (PRVF…VKLS), 1171–1254 (PKIQ…AEVT), 1261–1353 (PSVE…YNLK), 1357–1446 (PPVI…FSVN), 1451–1540 (PSIL…IKLT), 1545–1633 (PSIK…FHVD), 1638–1723 (PTIE…REIK), 1732–1820 (PAVE…FEVT), 1825–1913 (PTIK…TQLH), 1918–2006 (PSLD…YSLQ), 2011–2096 (PSIS…RDID), 2103–2189 (PNIM…YNVN), 2194–2284 (PSIY…YNLQ), 2289–2378 (PSIT…YDLS), 2383–2472 (PSII…FGLS), 2477–2565 (PHIV…FRLN), 2570–2661 (PTIA…YEVK), 2665–2762 (PPII…VNIQ), 2765–2863 (PSFQ…YDVH), 2867–2958 (PPVI…FNLN), 2962–3050 (PPSV…VSLT), and 3055–3145 (PSIK…FHLN). Intrachain disulfides connect C451/C499 and C541/C591. O-linked (GalNAc...) threonine glycosylation is present at T615. 11 cysteine pairs are disulfide-bonded: C633–C681, C723–C772, C814–C867, C911–C960, C1002–C1051, C1101–C1150, C1192–C1240, C1287–C1337, C1381–C1430, C1474–C1524, and C1568–C1617. 2 O-linked (GalNAc...) threonine glycosylation sites follow: T1292 and T1386. The O-linked (GalNAc...) threonine glycan is linked to T1639. 2 cysteine pairs are disulfide-bonded: C1662-C1711 and C1755-C1804. O-linked (GalNAc...) threonine glycosylation is present at T1826. 14 disulfides stabilise this stretch: C1847/C1897, C1941/C1990, C2032/C2082, C2124/C2173, C2217/C2268, C2313/C2362, C2407/C2456, C2500/C2549, C2596/C2645, C2695/C2744, C2798/C2847, C2893/C2942, C2985/C3034, and C3080/C3129. An O-linked (GalNAc...) threonine glycan is attached at T3151. 15 Ig-like C2-type domains span residues 3155–3227 (PETE…VASN), 3244–3334 (PSVA…FNLN), 3339–3428 (PKIR…YSLQ), 3433–3515 (PNMD…GEVS), 3526–3614 (PHIN…YLVR), 3619–3707 (PNIA…FNLT), 3712–3798 (PSIG…IDLQ), 3803–3891 (PSIA…VDLT), 3896–3982 (PTIA…VTLR), 3987–4073 (PVIQ…VKLN), 4077–4163 (PPVI…STLT), 4168–4252 (PRIQ…RIVT), 4259–4332 (PTFT…AENS), 4347–4434 (PPVF…MSLT), and 4439–4526 (PIIT…VIVQ). 8 cysteine pairs are disulfide-bonded: C3172–C3223, C3267–C3318, C3363–C3412, C3456–C3505, C3549–C3598, C3642–C3691, C3733–C3782, and C3824–C3875. Residue T3897 is glycosylated (O-linked (GalNAc...) threonine). Cystine bridges form between C3917/C3966, C4008/C4057, C4099/C4147, C4189/C4238, C4280/C4327, C4370/C4418, C4460/C4508, C4540/C4577, C4544/C4582, C4555/C4567, C4597/C4634, C4601/C4639, C4612/C4624, C4654/C4691, C4658/C4696, C4669/C4681, C4711/C4748, C4715/C4753, C4726/C4738, C4768/C4805, C4772/C4810, C4783/C4795, C4825/C4862, C4829/C4867, and C4840/C4852. O-linked (GalNAc...) threonine glycosylation is present at T4379. TSP type-1 domains lie at 4528–4583 (HGGF…KLCP), 4585–4640 (DGHW…RPCP), 4642–4697 (HGVW…RHCP), 4699–4754 (DGRW…DPCP), 4756–4811 (HGNW…DMCP), and 4813–4868 (DGSW…QACP). The Nidogen G2 beta-barrel domain maps to 4870–5092 (GPQRARGSVI…SKGDRSNQCP (223 aa)). The EGF-like 1; calcium-binding domain maps to 5106–5145 (DEDECTAGNPCSHTCHNAIGAYYCSCPKGLTIAADGRTCQ). 3 cysteine pairs are disulfide-bonded: C5110/C5120, C5116/C5129, and C5131/C5144. The region spanning 5146 to 5189 (DIDECALGGHTCRAGQDCDNTIGSYRCVVHCGTGFRRTSDGLSC) is the EGF-like 2; calcium-binding domain. Residues 5191 to 5228 (DINECQESSPCHQRCFNVIGSFHCGCEAGYQLKGRKCI) form the EGF-like 3; calcium-binding domain. Cystine bridges form between C5195–C5205, C5201–C5214, and C5216–C5227. One can recognise an EGF-like 4; calcium-binding domain in the interval 5229 to 5269 (DVNECRQNVCRPDQHCKNTRGGYKCIDLCPSGMTKAENGTC). The 36-residue stretch at 5271 to 5306 (DIDECKDGTHQCRYNQICENTRGSYRCACPRGYRSQ) folds into the EGF-like 5; calcium-binding domain. 8 disulfides stabilise this stretch: C5275-C5288, C5282-C5297, C5318-C5329, C5325-C5338, C5340-C5353, C5435-C5445, C5441-C5454, and C5456-C5469. The 41-residue stretch at 5314-5354 (DINECEQVPKPCAHQCSNSPGSFKCICLPGQQLLGDGKSCA) folds into the EGF-like 6; calcium-binding domain. Residues 5431 to 5470 (DIDECQNRDTCQHECKNTIGSYQCVCPPGYRLMLNGKTCQ) form the EGF-like 7; calcium-binding domain.

In the kidney, expressed in the glomerulus (at protein level). Expressed in whisker and hair follicles, eye, tongue, and splenic and lymph node conduits (at protein level). In the embryo, localizes to the cleavage furrow at the two-cell stage (at protein level). In neonatal skin, expressed throughout the dermis (at protein level). In adult skin, strongly concentrated at the dermal side of the basement membrane but not detectable in the deeper dermis. Shows tendon-specific localization at the myotendinous junction and is also detected in the perichondrium (at protein level). Expressed by chondrocytes residing in articular cartilage and the femoral growth plate of 52 week old mice (at protein level). Expressed in vascular endothelial cells in coronary arteries and sparsely in endocardial endothelium (at protein level). Expressed in skin, tongue, lung and eye. At 14.5 dpc, expressed in the vibrissae, dermis, forelimb, kidney, intestine, lung and iliac cartilage where expression is found mainly in mesenchymal cells.

The protein localises to the secreted. It localises to the extracellular space. Its subcellular location is the extracellular matrix. It is found in the basement membrane. The protein resides in the cytoplasm. The protein localises to the cell junction. It localises to the cleavage furrow. Functionally, involved in transforming growth factor beta-mediated rearrangement of the podocyte cytoskeleton which includes reduction of F-actin fibers and broadening, flattening and elongation of podocytes. Plays a role in basement membrane organization. May promote cleavage furrow maturation during cytokinesis in preimplantation embryos. May play a role in the architecture of adhesive and flexible epithelial cell junctions. May play a role during myocardial remodeling by imparting an effect on cardiac fibroblast migration. This Mus musculus (Mouse) protein is Hemicentin-1.